We begin with the raw amino-acid sequence, 464 residues long: Soluble pyridine nucleotide transhydrogenase (464 aa).

35–44 (DNRPLVGGNC) contributes to the FAD binding site.

Belongs to the class-I pyridine nucleotide-disulfide oxidoreductase family. It depends on FAD as a cofactor.

The protein resides in the cytoplasm. It catalyses the reaction NAD(+) + NADPH = NADH + NADP(+). Conversion of NADPH, generated by peripheral catabolic pathways, to NADH, which can enter the respiratory chain for energy generation. The polypeptide is Soluble pyridine nucleotide transhydrogenase (Stutzerimonas stutzeri (strain A1501) (Pseudomonas stutzeri)).